A 620-amino-acid chain; its full sequence is Chaperone protein HscA homolog (620 aa).

This sequence belongs to the heat shock protein 70 family.

In terms of biological role, chaperone involved in the maturation of iron-sulfur cluster-containing proteins. Has a low intrinsic ATPase activity which is markedly stimulated by HscB. The protein is Chaperone protein HscA homolog of Janthinobacterium sp. (strain Marseille) (Minibacterium massiliensis).